The sequence spans 188 residues: Ras-related protein Rap-1 (188 aa).

10 to 17 (GSGGVGKS) is a GTP binding site. Residues 32–40 (YDPTIEDSY) carry the Effector region motif. GTP contacts are provided by residues 57–61 (DTAGT) and 116–119 (NKCD).

It belongs to the small GTPase superfamily. Ras family.

The catalysed reaction is GTP + H2O = GDP + phosphate + H(+). Its function is as follows. Required in the hypodermis for proper formation of the cuticle. The chain is Ras-related protein Rap-1 (rap-1) from Caenorhabditis elegans.